The chain runs to 159 residues: Protein-export protein SecB (159 aa).

It belongs to the SecB family. Homotetramer, a dimer of dimers. One homotetramer interacts with 1 SecA dimer.

It localises to the cytoplasm. Functionally, one of the proteins required for the normal export of preproteins out of the cell cytoplasm. It is a molecular chaperone that binds to a subset of precursor proteins, maintaining them in a translocation-competent state. It also specifically binds to its receptor SecA. The sequence is that of Protein-export protein SecB from Nitrobacter hamburgensis (strain DSM 10229 / NCIMB 13809 / X14).